The primary structure comprises 397 residues: Formate-dependent phosphoribosylglycinamide formyltransferase (397 aa).

N(1)-(5-phospho-beta-D-ribosyl)glycinamide-binding positions include 22–23 and E82; that span reads EL. Residues R114, K155, 160–165, 195–198, and E203 contribute to the ATP site; these read SSGKGQ and EGFV. Positions 119-312 constitute an ATP-grasp domain; the sequence is CLAAEELSLP…EFALHARAIL (194 aa). E271 and E283 together coordinate Mg(2+). N(1)-(5-phospho-beta-D-ribosyl)glycinamide is bound by residues D290, K360, and 367-368; that span reads RR.

This sequence belongs to the PurK/PurT family. In terms of assembly, homodimer.

It carries out the reaction N(1)-(5-phospho-beta-D-ribosyl)glycinamide + formate + ATP = N(2)-formyl-N(1)-(5-phospho-beta-D-ribosyl)glycinamide + ADP + phosphate + H(+). The protein operates within purine metabolism; IMP biosynthesis via de novo pathway; N(2)-formyl-N(1)-(5-phospho-D-ribosyl)glycinamide from N(1)-(5-phospho-D-ribosyl)glycinamide (formate route): step 1/1. Involved in the de novo purine biosynthesis. Catalyzes the transfer of formate to 5-phospho-ribosyl-glycinamide (GAR), producing 5-phospho-ribosyl-N-formylglycinamide (FGAR). Formate is provided by PurU via hydrolysis of 10-formyl-tetrahydrofolate. This chain is Formate-dependent phosphoribosylglycinamide formyltransferase, found in Alcanivorax borkumensis (strain ATCC 700651 / DSM 11573 / NCIMB 13689 / SK2).